The primary structure comprises 325 residues: Delta(1)-pyrroline-2-carboxylate reductase (325 aa).

This sequence belongs to the ornithine cyclodeaminase/mu-crystallin family.

It carries out the reaction L-proline + NAD(+) = 1-pyrroline-2-carboxylate + NADH + H(+). The enzyme catalyses L-proline + NADP(+) = 1-pyrroline-2-carboxylate + NADPH + H(+). Its function is as follows. Catalyzes the reduction of Delta(1)-pyrroline-2-carboxylate (Pyr2C) to L-proline, using preferentially NADPH over NADH as the electron donor. Is likely involved in a degradation pathway that converts trans-3-hydroxy-L-proline (t3LHyp) to L-proline, which allows B.cereus to grow on t3LHyp as a sole carbon source. The protein is Delta(1)-pyrroline-2-carboxylate reductase of Bacillus cereus (strain ATCC 14579 / DSM 31 / CCUG 7414 / JCM 2152 / NBRC 15305 / NCIMB 9373 / NCTC 2599 / NRRL B-3711).